The primary structure comprises 270 residues: 4-hydroxy-tetrahydrodipicolinate reductase (270 aa).

NAD(+)-binding positions include 9 to 14 (GAGGRM) and Glu35. Arg36 serves as a coordination point for NADP(+). NAD(+)-binding positions include 99–101 (GTT) and 123–126 (ASNF). The Proton donor/acceptor role is filled by His156. His157 is a (S)-2,3,4,5-tetrahydrodipicolinate binding site. Residue Lys160 is the Proton donor of the active site. A (S)-2,3,4,5-tetrahydrodipicolinate-binding site is contributed by 166–167 (GT).

This sequence belongs to the DapB family.

The protein localises to the cytoplasm. It catalyses the reaction (S)-2,3,4,5-tetrahydrodipicolinate + NAD(+) + H2O = (2S,4S)-4-hydroxy-2,3,4,5-tetrahydrodipicolinate + NADH + H(+). The enzyme catalyses (S)-2,3,4,5-tetrahydrodipicolinate + NADP(+) + H2O = (2S,4S)-4-hydroxy-2,3,4,5-tetrahydrodipicolinate + NADPH + H(+). The protein operates within amino-acid biosynthesis; L-lysine biosynthesis via DAP pathway; (S)-tetrahydrodipicolinate from L-aspartate: step 4/4. Its function is as follows. Catalyzes the conversion of 4-hydroxy-tetrahydrodipicolinate (HTPA) to tetrahydrodipicolinate. The chain is 4-hydroxy-tetrahydrodipicolinate reductase from Haemophilus influenzae (strain 86-028NP).